The sequence spans 305 residues: Aspartate carbamoyltransferase catalytic subunit (305 aa).

Carbamoyl phosphate contacts are provided by arginine 56 and threonine 57. Lysine 85 is a binding site for L-aspartate. Carbamoyl phosphate contacts are provided by arginine 106, histidine 134, and glutamine 137. 2 residues coordinate L-aspartate: arginine 167 and arginine 227. Leucine 266 and proline 267 together coordinate carbamoyl phosphate.

The protein belongs to the aspartate/ornithine carbamoyltransferase superfamily. ATCase family. As to quaternary structure, heterooligomer of catalytic and regulatory chains.

The catalysed reaction is carbamoyl phosphate + L-aspartate = N-carbamoyl-L-aspartate + phosphate + H(+). It functions in the pathway pyrimidine metabolism; UMP biosynthesis via de novo pathway; (S)-dihydroorotate from bicarbonate: step 2/3. Its function is as follows. Catalyzes the condensation of carbamoyl phosphate and aspartate to form carbamoyl aspartate and inorganic phosphate, the committed step in the de novo pyrimidine nucleotide biosynthesis pathway. The protein is Aspartate carbamoyltransferase catalytic subunit of Thermoplasma volcanium (strain ATCC 51530 / DSM 4299 / JCM 9571 / NBRC 15438 / GSS1).